The following is a 107-amino-acid chain: Nucleoid-associated protein Rru_A3472 (107 aa).

This sequence belongs to the YbaB/EbfC family. Homodimer.

It localises to the cytoplasm. The protein localises to the nucleoid. Binds to DNA and alters its conformation. May be involved in regulation of gene expression, nucleoid organization and DNA protection. The sequence is that of Nucleoid-associated protein Rru_A3472 from Rhodospirillum rubrum (strain ATCC 11170 / ATH 1.1.1 / DSM 467 / LMG 4362 / NCIMB 8255 / S1).